A 293-amino-acid chain; its full sequence is Ribosomal protein L11 methyltransferase (293 aa).

Positions 145, 166, 188, and 230 each coordinate S-adenosyl-L-methionine.

The protein belongs to the methyltransferase superfamily. PrmA family.

Its subcellular location is the cytoplasm. It carries out the reaction L-lysyl-[protein] + 3 S-adenosyl-L-methionine = N(6),N(6),N(6)-trimethyl-L-lysyl-[protein] + 3 S-adenosyl-L-homocysteine + 3 H(+). Methylates ribosomal protein L11. This Shewanella sediminis (strain HAW-EB3) protein is Ribosomal protein L11 methyltransferase.